We begin with the raw amino-acid sequence, 401 residues long: Argininosuccinate synthase (401 aa).

8–16 (AYSGGLDTS) is a binding site for ATP. L-citrulline is bound at residue Tyr-87. Gly-117 is a binding site for ATP. L-aspartate contacts are provided by Thr-119, Asn-123, and Asp-124. Asn-123 provides a ligand contact to L-citrulline. Residues Arg-127, Ser-175, Glu-259, and Tyr-271 each coordinate L-citrulline.

Belongs to the argininosuccinate synthase family. Type 1 subfamily. In terms of assembly, homotetramer.

Its subcellular location is the cytoplasm. The catalysed reaction is L-citrulline + L-aspartate + ATP = 2-(N(omega)-L-arginino)succinate + AMP + diphosphate + H(+). It participates in amino-acid biosynthesis; L-arginine biosynthesis; L-arginine from L-ornithine and carbamoyl phosphate: step 2/3. The protein is Argininosuccinate synthase of Pseudarthrobacter chlorophenolicus (strain ATCC 700700 / DSM 12829 / CIP 107037 / JCM 12360 / KCTC 9906 / NCIMB 13794 / A6) (Arthrobacter chlorophenolicus).